The sequence spans 105 residues: uncharacterized protein (105 aa).

Serine 2 is subject to N-acetylserine.

This is an uncharacterized protein from Saccharomyces cerevisiae (strain ATCC 204508 / S288c) (Baker's yeast).